Reading from the N-terminus, the 301-residue chain is MFGNPAMTGLHQFTMWEHYFTGSIYLVLGCVVFSLCGMCIIFLARQSPKPRRKYAILIHVLITAMAVNGGDPAHASSSIVGRWLYGSVGCQLMGFWGFFGGMSHIWMLFAFAMERYMAVCHREFYQQMPSVYYSIIVGLMYTFGTFWATMPLLGWASYGLEVHGTSCTINYSVSDESYQSYVFFLAIFSFIFPMVSGWYAISKAWSGLSAIPDAEKEKDKDILSEEQLTALAGAFILISLISWSGFGYVAIYSALTHGGAQLSHLRGHVPPIMSKTGCALFPLLIFLLTARSLPKSDTKKP.

Residues 1-17 (MFGNPAMTGLHQFTMWE) are Extracellular-facing. The chain crosses the membrane as a helical span at residues 18-43 (HYFTGSIYLVLGCVVFSLCGMCIIFL). Residues 44-54 (ARQSPKPRRKY) lie on the Cytoplasmic side of the membrane. A helical transmembrane segment spans residues 55–76 (AILIHVLITAMAVNGGDPAHAS). At 77–94 (SSIVGRWLYGSVGCQLMG) the chain is on the extracellular side. A helical membrane pass occupies residues 95–120 (FWGFFGGMSHIWMLFAFAMERYMAVC). At 121-132 (HREFYQQMPSVY) the chain is on the cytoplasmic side. Residues 133 to 153 (YSIIVGLMYTFGTFWATMPLL) form a helical membrane-spanning segment. Residues 154–180 (GWASYGLEVHGTSCTINYSVSDESYQS) lie on the Extracellular side of the membrane. N170 is a glycosylation site (N-linked (GlcNAc...) asparagine). The helical transmembrane segment at 181 to 208 (YVFFLAIFSFIFPMVSGWYAISKAWSGL) threads the bilayer. At 209–230 (SAIPDAEKEKDKDILSEEQLTA) the chain is on the cytoplasmic side. A helical membrane pass occupies residues 231-255 (LAGAFILISLISWSGFGYVAIYSAL). Over 256 to 264 (THGGAQLSH) the chain is Extracellular. A helical membrane pass occupies residues 265–289 (LRGHVPPIMSKTGCALFPLLIFLLT). Position 275 is an N6-(retinylidene)lysine (K275). Residues 290 to 301 (ARSLPKSDTKKP) lie on the Cytoplasmic side of the membrane.

The protein belongs to the G-protein coupled receptor 1 family. Opsin subfamily. In terms of tissue distribution, mainly stored in myeloid bodies of the inner segments.

It localises to the membrane. Functionally, retinochrome is capable of acting as an effective catalyst in the light to convert various isomers of retinal into 11-cis, the form that is required by opsin to resynthesize rhodopsin. This Todarodes pacificus (Japanese flying squid) protein is Retinochrome.